The primary structure comprises 149 residues: Endoribonuclease YbeY (149 aa).

His112, His116, and His122 together coordinate Zn(2+).

Belongs to the endoribonuclease YbeY family. It depends on Zn(2+) as a cofactor.

Its subcellular location is the cytoplasm. Functionally, single strand-specific metallo-endoribonuclease involved in late-stage 70S ribosome quality control and in maturation of the 3' terminus of the 16S rRNA. In Methylibium petroleiphilum (strain ATCC BAA-1232 / LMG 22953 / PM1), this protein is Endoribonuclease YbeY.